Reading from the N-terminus, the 89-residue chain is Small ribosomal subunit protein uS14B (89 aa).

The tract at residues 38 to 61 is disordered; it reads KLPKDAHPSRLKLRDQTDGRPRGY. Over residues 39 to 58 the composition is skewed to basic and acidic residues; sequence LPKDAHPSRLKLRDQTDGRP.

It belongs to the universal ribosomal protein uS14 family. In terms of assembly, part of the 30S ribosomal subunit. Contacts proteins S3 and S10.

Binds 16S rRNA, required for the assembly of 30S particles and may also be responsible for determining the conformation of the 16S rRNA at the A site. The sequence is that of Small ribosomal subunit protein uS14B from Enterococcus faecalis (strain ATCC 700802 / V583).